Here is a 286-residue protein sequence, read N- to C-terminus: Putative L-ribulose-5-phosphate 3-epimerase SgbU (286 aa).

The protein belongs to the L-ribulose-5-phosphate 3-epimerase family.

It catalyses the reaction L-ribulose 5-phosphate = L-xylulose 5-phosphate. Catalyzes the isomerization of L-xylulose-5-phosphate to L-ribulose-5-phosphate (Potential). May be involved in the utilization of 2,3-diketo-L-gulonate. The polypeptide is Putative L-ribulose-5-phosphate 3-epimerase SgbU (sgbU) (Escherichia coli (strain K12)).